The following is a 331-amino-acid chain: Tetraacyldisaccharide 4'-kinase (331 aa).

55–62 serves as a coordination point for ATP; that stretch reads SVGGNGKT.

This sequence belongs to the LpxK family.

The enzyme catalyses a lipid A disaccharide + ATP = a lipid IVA + ADP + H(+). The protein operates within glycolipid biosynthesis; lipid IV(A) biosynthesis; lipid IV(A) from (3R)-3-hydroxytetradecanoyl-[acyl-carrier-protein] and UDP-N-acetyl-alpha-D-glucosamine: step 6/6. Transfers the gamma-phosphate of ATP to the 4'-position of a tetraacyldisaccharide 1-phosphate intermediate (termed DS-1-P) to form tetraacyldisaccharide 1,4'-bis-phosphate (lipid IVA). This is Tetraacyldisaccharide 4'-kinase from Aeromonas salmonicida (strain A449).